The following is a 279-amino-acid chain: Small ribosomal subunit protein uS2 (279 aa).

3 stretches are compositionally biased toward acidic residues: residues 1–18, 28–42, and 65–81; these read MTEN…DEAV, TATE…DESN, and ADAE…FDED. A disordered region spans residues 1 to 81; it reads MTENDNEVVE…ELEGPTFDED (81 aa).

Belongs to the universal ribosomal protein uS2 family.

This chain is Small ribosomal subunit protein uS2, found in Haloquadratum walsbyi (strain DSM 16790 / HBSQ001).